The sequence spans 1095 residues: 1-phosphatidylinositol 4,5-bisphosphate phosphodiesterase (1095 aa).

Residues 319 to 469 (MEMDQPLAHY…LKRKILIKNK (151 aa)) enclose the PI-PLC X-box domain. Residues His-334 and His-381 contribute to the active site. Positions 467 and 469 each coordinate substrate. The interval 487–529 (ELKTDDDPEEDASAGKPPEAAAAPAPAPEAAAAAEGAAEGGGG) is disordered. The span at 500-523 (AGKPPEAAAAPAPAPEAAAAAEGA) shows a compositional bias: low complexity. One can recognise a PI-PLC Y-box domain in the interval 550-666 (LSSMVNYAQP…GYLLKPDFMR (117 aa)). Substrate contacts are provided by Ser-579 and Arg-606. A C2 domain is found at 666 to 794 (RRADKDFDPF…SLRTEANFPM (129 aa)). 2 disordered regions span residues 842–863 (IEEQ…EKKE) and 1000–1030 (QAKM…LREK). Basic and acidic residues-rich tracts occupy residues 852-863 (DAGKAKEEEKKE) and 1007-1030 (TAKE…LREK).

In terms of assembly, interacts with inaD. In terms of tissue distribution, abundantly expressed in the adult retina.

It carries out the reaction a 1,2-diacyl-sn-glycero-3-phospho-(1D-myo-inositol-4,5-bisphosphate) + H2O = 1D-myo-inositol 1,4,5-trisphosphate + a 1,2-diacyl-sn-glycerol + H(+). In terms of biological role, the production of the second messenger molecules diacylglycerol (DAG) and inositol 1,4,5-trisphosphate (IP3) is mediated by activated phosphatidylinositol-specific phospholipase C enzymes. Essential component of the phototransduction pathway. Essential downstream component of a hh-signaling pathway which regulates the Duox-dependent gut immune response to bacterial uracil; required for the activation of Cad99C and consequently Cad99C-dependent endosome formation, which is essential for the Duox-dependent production of reactive oxygen species (ROS) in response to intestinal bacterial infection. In Drosophila melanogaster (Fruit fly), this protein is 1-phosphatidylinositol 4,5-bisphosphate phosphodiesterase.